A 239-amino-acid polypeptide reads, in one-letter code: 1-(5-phosphoribosyl)-5-[(5-phosphoribosylamino)methylideneamino] imidazole-4-carboxamide isomerase (239 aa).

Catalysis depends on aspartate 8, which acts as the Proton acceptor. Aspartate 129 acts as the Proton donor in catalysis.

The protein belongs to the HisA/HisF family.

It is found in the cytoplasm. The enzyme catalyses 1-(5-phospho-beta-D-ribosyl)-5-[(5-phospho-beta-D-ribosylamino)methylideneamino]imidazole-4-carboxamide = 5-[(5-phospho-1-deoxy-D-ribulos-1-ylimino)methylamino]-1-(5-phospho-beta-D-ribosyl)imidazole-4-carboxamide. The protein operates within amino-acid biosynthesis; L-histidine biosynthesis; L-histidine from 5-phospho-alpha-D-ribose 1-diphosphate: step 4/9. The polypeptide is 1-(5-phosphoribosyl)-5-[(5-phosphoribosylamino)methylideneamino] imidazole-4-carboxamide isomerase (Bacillus cereus (strain Q1)).